The following is a 396-amino-acid chain: Tryptophan synthase beta chain (396 aa).

Lys-86 is modified (N6-(pyridoxal phosphate)lysine).

The protein belongs to the TrpB family. In terms of assembly, tetramer of two alpha and two beta chains. Requires pyridoxal 5'-phosphate as cofactor.

It carries out the reaction (1S,2R)-1-C-(indol-3-yl)glycerol 3-phosphate + L-serine = D-glyceraldehyde 3-phosphate + L-tryptophan + H2O. It functions in the pathway amino-acid biosynthesis; L-tryptophan biosynthesis; L-tryptophan from chorismate: step 5/5. Functionally, the beta subunit is responsible for the synthesis of L-tryptophan from indole and L-serine. This Yersinia pseudotuberculosis serotype O:1b (strain IP 31758) protein is Tryptophan synthase beta chain.